Reading from the N-terminus, the 382-residue chain is Chorismate synthase (382 aa).

NADP(+) is bound by residues Arg39 and Arg45. A disordered region spans residues 89 to 113; that stretch reads SPEPGGEPRKKALTDARPGHADLTG. The span at 94–108 shows a compositional bias: basic and acidic residues; sequence GEPRKKALTDARPGH. FMN-binding positions include 128–130, 246–247, Ala290, 305–309, and Arg331; these read RAS, QA, and KPIAT.

This sequence belongs to the chorismate synthase family. In terms of assembly, homotetramer. FMNH2 is required as a cofactor.

The enzyme catalyses 5-O-(1-carboxyvinyl)-3-phosphoshikimate = chorismate + phosphate. Its pathway is metabolic intermediate biosynthesis; chorismate biosynthesis; chorismate from D-erythrose 4-phosphate and phosphoenolpyruvate: step 7/7. Catalyzes the anti-1,4-elimination of the C-3 phosphate and the C-6 proR hydrogen from 5-enolpyruvylshikimate-3-phosphate (EPSP) to yield chorismate, which is the branch point compound that serves as the starting substrate for the three terminal pathways of aromatic amino acid biosynthesis. This reaction introduces a second double bond into the aromatic ring system. The chain is Chorismate synthase from Deinococcus radiodurans (strain ATCC 13939 / DSM 20539 / JCM 16871 / CCUG 27074 / LMG 4051 / NBRC 15346 / NCIMB 9279 / VKM B-1422 / R1).